The sequence spans 229 residues: Putative ABC transporter permease protein ORF1 (229 aa).

Residues 23 to 214 (ALNSLLVALA…LPSLAFFALV (192 aa)) form the ABC transmembrane type-1 domain. Helical transmembrane passes span 27–47 (LLVA…MAYV), 62–82 (WVVV…FLVL), 91–111 (LTGL…WMLA), 150–170 (ATAL…LVLL), and 194–214 (SPAG…FALV).

The protein belongs to the binding-protein-dependent transport system permease family. MalFG subfamily.

The protein localises to the cell membrane. Its function is as follows. May participate in oleandomycin secretion during antibiotic production. The sequence is that of Putative ABC transporter permease protein ORF1 from Streptomyces antibioticus.